A 153-amino-acid chain; its full sequence is Transcriptional repressor NrdR 2 (153 aa).

Residues 3-34 fold into a zinc finger; the sequence is CPFCGQDDTQVKDSRPTDDNAAIRRRRACPGC. Residues 49–139 enclose the ATP-cone domain; that stretch reads LVVVKKDGSR…VYRNFREAKD (91 aa).

The protein belongs to the NrdR family. Requires Zn(2+) as cofactor.

Its function is as follows. Negatively regulates transcription of bacterial ribonucleotide reductase nrd genes and operons by binding to NrdR-boxes. This Paramagnetospirillum magneticum (strain ATCC 700264 / AMB-1) (Magnetospirillum magneticum) protein is Transcriptional repressor NrdR 2.